Consider the following 580-residue polypeptide: MTAPAGPRGSETERLLTPNPGYGTQAGPSPAPPTPPEEEDLRRRLKYFFMSPCDKFRAKGRKPCKLMLQVVKILVVTVQLILFGLSNQLAVTFREENTIAFRHLFLLGYSDGADDTFAAYTREQLYQAIFHAVDQYLALPDVSLGRYAYVRGGGDPWTNGSGLALCQRYYHRGHVDPANDTFDIDPMVVTDCIQVDPPERPPPPPSDDLTLLESSSSYKNLTLKFHKLVNVTIHFRLKTINLQSLINNEIPDCYTFSVLITFDNKAHSGRIPISLETQAHIQECKHPSVFQHGDNSFRLLFDVVVILTCSLSFLLCARSLLRGFLLQNEFVGFMWRQRGRVISLWERLEFVNGWYILLVTSDVLTISGTIMKIGIEAKNLASYDVCSILLGTSTLLVWVGVIRYLTFFHNYNILIATLRVALPSVMRFCCCVAVIYLGYCFCGWIVLGPYHVKFRSLSMVSECLFSLINGDDMFVTFAAMQAQQGRSSLVWLFSQLYLYSFISLFIYMVLSLFIALITGAYDTIKHPGGAGAEESELQAYIAQCQDSPTSGKFRRGSGSACSLLCCCGRDPSEEHSLLVN.

The disordered stretch occupies residues 1 to 38 (MTAPAGPRGSETERLLTPNPGYGTQAGPSPAPPTPPEE). Residues 1–65 (MTAPAGPRGS…FRAKGRKPCK (65 aa)) are Cytoplasmic-facing. Serine 10 is modified (phosphoserine). The Dileucine motif; mediates targeting to lysosomes signature appears at 11–16 (ETERLL). The interaction with phosphoinositides stretch occupies residues 42–62 (RRRLKYFFMSPCDKFRAKGRK). A helical membrane pass occupies residues 66 to 86 (LMLQVVKILVVTVQLILFGLS). Residues 87-298 (NQLAVTFREE…VFQHGDNSFR (212 aa)) lie on the Extracellular side of the membrane. Residues 107–121 (LGYSDGADDTFAAYT) are extracellular/lumenal pore loop. A disulfide bridge links cysteine 166 with cysteine 192. N-linked (GlcNAc...) asparagine glycosylation is present at asparagine 230. An intrachain disulfide couples cysteine 253 to cysteine 284. Residues 299–321 (LLFDVVVILTCSLSFLLCARSLL) form a helical membrane-spanning segment. Residues 322–350 (RGFLLQNEFVGFMWRQRGRVISLWERLEF) lie on the Cytoplasmic side of the membrane. The chain crosses the membrane as a helical span at residues 351–371 (VNGWYILLVTSDVLTISGTIM). Topologically, residues 372-382 (KIGIEAKNLAS) are extracellular. A helical transmembrane segment spans residues 383–405 (YDVCSILLGTSTLLVWVGVIRYL). The Cytoplasmic portion of the chain corresponds to 406–427 (TFFHNYNILIATLRVALPSVMR). The helical transmembrane segment at 428 to 448 (FCCCVAVIYLGYCFCGWIVLG) threads the bilayer. The Extracellular portion of the chain corresponds to 449 to 456 (PYHVKFRS). The pore-forming intramembrane region spans 457-477 (LSMVSECLFSLINGDDMFVTF). The Selectivity filter motif lies at 469–474 (NGDDMF). Residues 478–491 (AAMQAQQGRSSLVW) lie on the Extracellular side of the membrane. The chain crosses the membrane as a helical span at residues 492-513 (LFSQLYLYSFISLFIYMVLSLF). The Cytoplasmic segment spans residues 514–580 (IALITGAYDT…PSEEHSLLVN (67 aa)). Phosphoserine; by PAK occurs at positions 557 and 559. A required for palmitoylation and association with membranes region spans residues 565-567 (CCC). The Dileucine internalization motif; mediates AP2 complex-dependent internalization motif lies at 573-578 (EEHSLL).

It belongs to the transient receptor (TC 1.A.4) family. Polycystin subfamily. MCOLN1 sub-subfamily. In terms of assembly, homotetramer. Homooligomer. Can heterooligomerize with MCOLN2 or MCOLN3; heteromeric assemblies have different channel properties as compared to the respective homooligomers and may be tissue-specific. Interacts with PDCD6. Interacts with TMEM163. Interacts with LAPTM4B. Palmitoylated; involved in association with membranes. In terms of processing, phosphorylation by PKA inhibits channel activity. Dephosphorylation increases activity. Post-translationally, proteolytically cleaved probably involving multiple lysosomal proteases including cathepsin B; inhibits lysosomal channel activity. In terms of tissue distribution, widely expressed in adult and fetal tissues.

Its subcellular location is the late endosome membrane. The protein resides in the lysosome membrane. The protein localises to the cytoplasmic vesicle membrane. It is found in the cell projection. It localises to the phagocytic cup. Its subcellular location is the cytoplasmic vesicle. The protein resides in the phagosome membrane. The protein localises to the cell membrane. The catalysed reaction is Ca(2+)(in) = Ca(2+)(out). The enzyme catalyses Fe(2+)(in) = Fe(2+)(out). It catalyses the reaction Mg(2+)(in) = Mg(2+)(out). It carries out the reaction K(+)(in) = K(+)(out). The catalysed reaction is Na(+)(in) = Na(+)(out). Its activity is regulated as follows. Channel activity is controlled by multiple regulatory mechanisms in different subcellular compartments. Channel function is transiently modulated by changes in Ca(2+) in a pH-dependent manner; pH changes modify the aggregation state of unitary channels; a negative cooperativity between extracellular/lumenal Ca(2+) and H(+) is suggested. Regulated by phosphoinositides in a compartment-specific manner: in lysosomes activated by PtdIns(3,5)P2 (Phosphatidylinositol 3,5-bisphosphate) and at the plasma membrane inhibited by PtdIns(4,5)P2 (Phosphatidylinositol 4,5-bisphosphate). Functionally, nonselective cation channel probably playing a role in the regulation of membrane trafficking events and of metal homeostasis. Acts as a Ca(2+)-permeable cation channel with inwardly rectifying activity. Proposed to play a major role in Ca(2+) release from late endosome and lysosome vesicles to the cytoplasm, which is important for many lysosome-dependent cellular events, including the fusion and trafficking of these organelles, exocytosis and autophagy. Required for efficient uptake of large particles in macrophages in which Ca(2+) release from the lysosomes triggers lysosomal exocytosis. May also play a role in phagosome-lysosome fusion. Involved in lactosylceramide trafficking indicative for a role in the regulation of late endocytic membrane fusion/fission events. By mediating lysosomal Ca(2+) release is involved in regulation of mTORC1 signaling and in mTOR/TFEB-dependent lysosomal adaptation to environmental cues such as nutrient levels. Seems to act as lysosomal active oxygen species (ROS) sensor involved in ROS-induced TFEB activation and autophagy. Also functions as a Fe(2+) permeable channel in late endosomes and lysosomes. Also permeable to Mg(2+), Na(+). K(+) and Cs(+). Proposed to play a role in zinc homeostasis probably implicating its association with TMEM163 In adaptive immunity, TRPML2 and TRPML1 may play redundant roles in the function of the specialized lysosomes of B cells. In terms of biological role, may contribute to cellular lipase activity within the late endosomal pathway or at the cell surface which may be involved in processes of membrane reshaping and vesiculation, especially the growth of tubular structures. However, it is not known, whether it conveys the enzymatic activity directly, or merely facilitates the activity of an associated phospholipase. This Homo sapiens (Human) protein is Mucolipin-1.